The chain runs to 132 residues: MIEPFLGTWKLISSENFENYVRELGVECEPRKVACLIKPSVSISFNGERMDIQAGSACRNTEISFKLGEEFEETTADNRKVKSLITFEGGSMIQVQKWLGKQTTIKRKIVDGKMVVECTMNNVVSTRIYERV.

A phosphoserine mark is found at serine 13, serine 14, serine 40, serine 42, serine 44, and serine 91.

This sequence belongs to the calycin superfamily. Fatty-acid binding protein (FABP) family. Testis.

It localises to the cytoplasm. In Mus musculus (Mouse), this protein is Fatty acid-binding protein 9 (Fabp9).